The sequence spans 117 residues: Large ribosomal subunit protein bL17 (117 aa).

Belongs to the bacterial ribosomal protein bL17 family. As to quaternary structure, part of the 50S ribosomal subunit. Contacts protein L32.

This is Large ribosomal subunit protein bL17 from Neorickettsia sennetsu (strain ATCC VR-367 / Miyayama) (Ehrlichia sennetsu).